The chain runs to 883 residues: Serine/threonine-protein phosphatase BSL1 homolog (883 aa).

Kelch repeat units follow at residues 64-113, 221-271, 273-323, and 341-387; these read ASSG…AVGT, MLLL…VFVG, RLHV…DHDA, and QIYI…NRNH. 3 disordered regions span residues 381 to 402, 430 to 466, and 499 to 525; these read ENQN…STDK, SHAS…SLEP, and NESR…QRSP. A compositionally biased stretch (polar residues) spans 385 to 399; that stretch reads RNHNFNSDSPTTNNS. Mn(2+) is bound by residues Asp-586, His-588, Asp-620, and Asn-652. His-653 serves as the catalytic Proton donor. The Mn(2+) site is built by His-705 and His-784. The disordered stretch occupies residues 861 to 883; it reads QRPPTPTRGRPQSASDRNSLAYI. Positions 872–883 are enriched in polar residues; that stretch reads QSASDRNSLAYI.

This sequence belongs to the PPP phosphatase family. BSU subfamily. In terms of assembly, interacts with the phosphorylated form of BSK3. It depends on Mn(2+) as a cofactor.

The protein localises to the nucleus. It catalyses the reaction O-phospho-L-seryl-[protein] + H2O = L-seryl-[protein] + phosphate. It carries out the reaction O-phospho-L-threonyl-[protein] + H2O = L-threonyl-[protein] + phosphate. The polypeptide is Serine/threonine-protein phosphatase BSL1 homolog (BSL1) (Oryza sativa subsp. japonica (Rice)).